The primary structure comprises 172 residues: Translation initiation factor IF-3 (172 aa).

The protein belongs to the IF-3 family. In terms of assembly, monomer.

It localises to the cytoplasm. Functionally, IF-3 binds to the 30S ribosomal subunit and shifts the equilibrium between 70S ribosomes and their 50S and 30S subunits in favor of the free subunits, thus enhancing the availability of 30S subunits on which protein synthesis initiation begins. This chain is Translation initiation factor IF-3, found in Bartonella tribocorum (strain CIP 105476 / IBS 506).